The primary structure comprises 71 residues: Sodium channel neurotoxin MeuNaTxalpha-12 (71 aa).

The N-terminal stretch at 1–6 (MTGVES) is a signal peptide. An LCN-type CS-alpha/beta domain is found at 8 to 70 (RDAYIAQGNN…VPIRIQGKCQ (63 aa)). Cystine bridges form between Cys18–Cys69, Cys22–Cys42, Cys28–Cys52, and Cys32–Cys54. Arg71 is a propeptide (removed by a carboxypeptidase).

This sequence belongs to the long (4 C-C) scorpion toxin superfamily. Sodium channel inhibitor family. Alpha subfamily. As to expression, expressed by the venom gland.

The protein resides in the secreted. Its function is as follows. Alpha toxins bind voltage-independently at site-3 of sodium channels (Nav) and inhibit the inactivation of the activated channels, thereby blocking neuronal transmission. The polypeptide is Sodium channel neurotoxin MeuNaTxalpha-12 (Mesobuthus eupeus (Lesser Asian scorpion)).